The chain runs to 125 residues: UPF0763 protein NAMH_0545 (125 aa).

Belongs to the UPF0763 family.

The sequence is that of UPF0763 protein NAMH_0545 from Nautilia profundicola (strain ATCC BAA-1463 / DSM 18972 / AmH).